A 358-amino-acid polypeptide reads, in one-letter code: Chorismate synthase (358 aa).

Position 47 (Arg47) interacts with NADP(+). Residues 124–126 (RSS), 240–241 (NA), Gly284, 299–303 (KPVAT), and Arg325 each bind FMN.

Belongs to the chorismate synthase family. In terms of assembly, homotetramer. FMNH2 serves as cofactor.

The catalysed reaction is 5-O-(1-carboxyvinyl)-3-phosphoshikimate = chorismate + phosphate. It participates in metabolic intermediate biosynthesis; chorismate biosynthesis; chorismate from D-erythrose 4-phosphate and phosphoenolpyruvate: step 7/7. Functionally, catalyzes the anti-1,4-elimination of the C-3 phosphate and the C-6 proR hydrogen from 5-enolpyruvylshikimate-3-phosphate (EPSP) to yield chorismate, which is the branch point compound that serves as the starting substrate for the three terminal pathways of aromatic amino acid biosynthesis. This reaction introduces a second double bond into the aromatic ring system. This is Chorismate synthase from Bacteroides fragilis (strain YCH46).